A 236-amino-acid chain; its full sequence is Small ribosomal subunit protein uS3 (236 aa).

The 69-residue stretch at 39 to 107 folds into the KH type-2 domain; it reads IREFLTEELK…DTSLNIVEVR (69 aa). The disordered stretch occupies residues 214–236; sequence ASERRAVEGDNQGSSSNRRRENA.

The protein belongs to the universal ribosomal protein uS3 family. As to quaternary structure, part of the 30S ribosomal subunit. Forms a tight complex with proteins S10 and S14.

In terms of biological role, binds the lower part of the 30S subunit head. Binds mRNA in the 70S ribosome, positioning it for translation. The sequence is that of Small ribosomal subunit protein uS3 from Brucella anthropi (strain ATCC 49188 / DSM 6882 / CCUG 24695 / JCM 21032 / LMG 3331 / NBRC 15819 / NCTC 12168 / Alc 37) (Ochrobactrum anthropi).